Reading from the N-terminus, the 65-residue chain is DNA-directed RNA polymerase subunit Rpo10 (65 aa).

Positions 7, 10, 44, and 45 each coordinate Zn(2+).

Belongs to the archaeal Rpo10/eukaryotic RPB10 RNA polymerase subunit family. As to quaternary structure, part of the RNA polymerase complex. It depends on Zn(2+) as a cofactor.

Its subcellular location is the cytoplasm. The protein resides in the chromosome. The enzyme catalyses RNA(n) + a ribonucleoside 5'-triphosphate = RNA(n+1) + diphosphate. In terms of biological role, DNA-dependent RNA polymerase (RNAP) catalyzes the transcription of DNA into RNA using the four ribonucleoside triphosphates as substrates. The chain is DNA-directed RNA polymerase subunit Rpo10 from Thermococcus kodakarensis (strain ATCC BAA-918 / JCM 12380 / KOD1) (Pyrococcus kodakaraensis (strain KOD1)).